We begin with the raw amino-acid sequence, 195 residues long: Imidazoleglycerol-phosphate dehydratase (195 aa).

The protein belongs to the imidazoleglycerol-phosphate dehydratase family.

The protein localises to the cytoplasm. The enzyme catalyses D-erythro-1-(imidazol-4-yl)glycerol 3-phosphate = 3-(imidazol-4-yl)-2-oxopropyl phosphate + H2O. It functions in the pathway amino-acid biosynthesis; L-histidine biosynthesis; L-histidine from 5-phospho-alpha-D-ribose 1-diphosphate: step 6/9. This Burkholderia cenocepacia (strain ATCC BAA-245 / DSM 16553 / LMG 16656 / NCTC 13227 / J2315 / CF5610) (Burkholderia cepacia (strain J2315)) protein is Imidazoleglycerol-phosphate dehydratase.